Here is a 283-residue protein sequence, read N- to C-terminus: uncharacterized protein (283 aa).

The 99-residue stretch at 172–270 (EAIRDYIDER…ERSPSEYRRQ (99 aa)) folds into the HTH araC/xylS-type domain. 2 consecutive DNA-binding regions (H-T-H motif) follow at residues 189-210 (ESVAQAFYISPNYLSHLFQKTG) and 237-260 (VKEVAHACGFVDSNYFCRLFRKNT).

This is an uncharacterized protein from Escherichia coli (strain K12).